The chain runs to 189 residues: Large ribosomal subunit protein uL5 (189 aa).

Belongs to the universal ribosomal protein uL5 family. As to quaternary structure, part of the 50S ribosomal subunit; part of the 5S rRNA/L5/L18/L25 subcomplex. Contacts the 5S rRNA and the P site tRNA. Forms a bridge to the 30S subunit in the 70S ribosome.

This is one of the proteins that bind and probably mediate the attachment of the 5S RNA into the large ribosomal subunit, where it forms part of the central protuberance. In the 70S ribosome it contacts protein S13 of the 30S subunit (bridge B1b), connecting the 2 subunits; this bridge is implicated in subunit movement. Contacts the P site tRNA; the 5S rRNA and some of its associated proteins might help stabilize positioning of ribosome-bound tRNAs. This is Large ribosomal subunit protein uL5 from Kineococcus radiotolerans (strain ATCC BAA-149 / DSM 14245 / SRS30216).